A 469-amino-acid polypeptide reads, in one-letter code: ATP synthase subunit beta (469 aa).

Residue 155–162 (GGAGVGKT) participates in ATP binding.

It belongs to the ATPase alpha/beta chains family. F-type ATPases have 2 components, CF(1) - the catalytic core - and CF(0) - the membrane proton channel. CF(1) has five subunits: alpha(3), beta(3), gamma(1), delta(1), epsilon(1). CF(0) has three main subunits: a(1), b(2) and c(9-12). The alpha and beta chains form an alternating ring which encloses part of the gamma chain. CF(1) is attached to CF(0) by a central stalk formed by the gamma and epsilon chains, while a peripheral stalk is formed by the delta and b chains.

It is found in the cell inner membrane. The catalysed reaction is ATP + H2O + 4 H(+)(in) = ADP + phosphate + 5 H(+)(out). Produces ATP from ADP in the presence of a proton gradient across the membrane. The catalytic sites are hosted primarily by the beta subunits. The polypeptide is ATP synthase subunit beta (Thermosipho melanesiensis (strain DSM 12029 / CIP 104789 / BI429)).